The following is a 438-amino-acid chain: PHAF1 protein CG7083 (438 aa).

This sequence belongs to the PHAF1 family.

It localises to the cytoplasm. It is found in the preautophagosomal structure. May play a regulatory role in autophagic activity. This is PHAF1 protein CG7083 from Drosophila melanogaster (Fruit fly).